We begin with the raw amino-acid sequence, 598 residues long: Probable translation initiation factor IF-2 (598 aa).

Residues 3–225 (LRCPIVSVLG…GLAQKFLEQK (223 aa)) enclose the tr-type G domain. The interval 12–19 (GHVDHGKT) is G1. 12–19 (GHVDHGKT) is a GTP binding site. The G2 stretch occupies residues 37–41 (GITQH). The G3 stretch occupies residues 76–79 (DTPG). Residues 76 to 80 (DTPGH) and 130 to 133 (NKLD) each bind GTP. The interval 130–133 (NKLD) is G4. Residues 200 to 202 (SAI) form a G5 region.

This sequence belongs to the TRAFAC class translation factor GTPase superfamily. Classic translation factor GTPase family. IF-2 subfamily.

In terms of biological role, function in general translation initiation by promoting the binding of the formylmethionine-tRNA to ribosomes. Seems to function along with eIF-2. The polypeptide is Probable translation initiation factor IF-2 (Methanococcus vannielii (strain ATCC 35089 / DSM 1224 / JCM 13029 / OCM 148 / SB)).